A 133-amino-acid polypeptide reads, in one-letter code: Global transcriptional regulator Spx (133 aa).

A disulfide bond links C10 and C13.

It belongs to the ArsC family. Spx subfamily. Interacts with the C-terminal domain of the alpha subunit of the RNAP.

It localises to the cytoplasm. Its function is as follows. Global transcriptional regulator that plays a key role in stress response and exerts either positive or negative regulation of genes. Acts by interacting with the C-terminal domain of the alpha subunit of the RNA polymerase (RNAP). This interaction can enhance binding of RNAP to the promoter region of target genes and stimulate their transcription, or block interaction of RNAP with activator. The sequence is that of Global transcriptional regulator Spx from Streptococcus pneumoniae serotype 4 (strain ATCC BAA-334 / TIGR4).